Here is a 361-residue protein sequence, read N- to C-terminus: dTDP-glucose 4,6-dehydratase 1 (361 aa).

NAD(+) contacts are provided by residues 11–12 (FI), 32–35 (DKLT), 58–59 (DI), 80–84 (LAAES), and Thr-99. Ser-84 lines the substrate pocket. Thr-133 contributes to the substrate binding site. Asp-134 (proton donor) is an active-site residue. Catalysis depends on proton acceptor residues Glu-135 and Tyr-167. An NAD(+)-binding site is contributed by 167-171 (YSASK). Asn-196 serves as a coordination point for substrate. Residue Asn-197 participates in NAD(+) binding. Residues 206–207 (KL), 222–224 (PIY), Arg-231, Asn-266, and 296–300 (DRPGH) contribute to the substrate site.

Belongs to the NAD(P)-dependent epimerase/dehydratase family. dTDP-glucose dehydratase subfamily. As to quaternary structure, homodimer. The cofactor is NAD(+).

The enzyme catalyses dTDP-alpha-D-glucose = dTDP-4-dehydro-6-deoxy-alpha-D-glucose + H2O. It participates in carbohydrate biosynthesis; dTDP-L-rhamnose biosynthesis. The protein operates within bacterial outer membrane biogenesis; LPS O-antigen biosynthesis. Its function is as follows. Catalyzes the dehydration of dTDP-D-glucose to form dTDP-6-deoxy-D-xylo-4-hexulose via a three-step process involving oxidation, dehydration and reduction. The chain is dTDP-glucose 4,6-dehydratase 1 (rfbB) from Escherichia coli (strain K12).